The primary structure comprises 117 residues: UPF0102 protein Ssed_4252 (117 aa).

This sequence belongs to the UPF0102 family.

This is UPF0102 protein Ssed_4252 from Shewanella sediminis (strain HAW-EB3).